Here is a 708-residue protein sequence, read N- to C-terminus: MKLFVPALLSLGALGLCLAAPRKNVRWCAISLPEWSKCYQWQRRMRKLGAPSITCIRRTSALECIRAIAGKNADAVTLDSGMVFEAGLDPYKLRPVAAEIYGTEKSPQTHYYAVAVVKKGSNFQLDQLQGQKSCHMGLGRSAGWNIPVGILRPFLSWTESAEPLQGAVARFFSASCVPCVDGKAYPNLCQLCKGVGENKCACSSQEPYFGYSGAFKCLQDGAGDVAFVKETTVFENLPEKADRDQYELLCLNNTRAPVDAFKECHLAQVPSHAVVARSVDGKENLIWELLRKAQEKFGKNKSQSFQLFGSPEGRRDLLFKDSALGFVRIPSKVDSALYLGSRYLTALKNLRETAEELKARCTRVVWCAVGPEEQSKCQQWSEQSGQNVTCATASTTDDCIALVLKGEADALSLDGGYIYTAGKCGLVPVMAENRKSSKYSSLDCVLRPTEGYLAVAVVKKANEGLTWNSLKGKKSCHTAVDRTAGWNIPMGLIANQTGSCAFDEFFSQSCAPGADPKSSLCALCAGDDQGLDKCVPNSKEKYYGYTGAFRCLAEDVGDVAFVKNDTVWENTNGESSADWAKNLNREDFRLLCLDGTTKPVTEAQSCYLAVAPNHAVVSRSDRAAHVEQVLLHQQALFGKNGKNCPDQFCLFKSETKNLLFNDNTECLAKLGGRPTYEKYLGTEYVTAIANLKKCSTSPLLEACAFLTR.

Residues 1–19 form the signal peptide; the sequence is MKLFVPALLSLGALGLCLA. 2 Transferrin-like domains span residues 25-352 and 364-693; these read VRWC…NLRE and VVWC…NLKK. Disulfide bonds link C28–C64 and C38–C55. Residue D79 participates in Fe(3+) binding. K92 is an active-site residue. Y111 serves as a coordination point for Fe(3+). Intrachain disulfides connect C134–C217, C176–C192, C179–C202, C189–C200, and C250–C264. Hydrogencarbonate contacts are provided by R140, A142, and G143. Y211 is a binding site for Fe(3+). An N-linked (GlcNAc...) (high mannose) asparagine glycan is attached at N252. H272 is a binding site for Fe(3+). The active-site Nucleophile is the S278. N-linked (GlcNAc...) asparagine glycosylation is present at N300. Cystine bridges form between C367/C399 and C377/C390. N-linked (GlcNAc...) (complex) asparagine; alternate glycosylation occurs at N387. Residue N387 is glycosylated (N-linked (GlcNAc...) (high mannose) asparagine; alternate). N-linked (GlcNAc...) (hybrid) asparagine; alternate glycosylation occurs at N387. Residues D414 and Y452 each coordinate Fe(3+). 8 disulfides stabilise this stretch: C424/C703, C444/C666, C476/C551, C500/C694, C510/C524, C521/C534, C592/C606, and C644/C649. Positions 478, 482, 484, and 485 each coordinate hydrogencarbonate. N495 carries an N-linked (GlcNAc...) (complex) asparagine; alternate glycan. N-linked (GlcNAc...) (high mannose) asparagine; alternate glycosylation occurs at N495. N-linked (GlcNAc...) (hybrid) asparagine; alternate glycosylation occurs at N495. A Fe(3+)-binding site is contributed by Y545. N564 carries an N-linked (GlcNAc...) (high mannose) asparagine glycan. A Fe(3+)-binding site is contributed by H614.

It belongs to the transferrin family. Monomer. Found in a complex with LTF, CLU, EPPIN and SEMG1. Found in a complex with MPO and LTF; interacts directly with CP, allows Fe(3+) incorporation into LTF and activation of CP ferroxidase activity. In terms of processing, poly-N-acetyllactosaminic carbohydrate moiety seems to be needed for TLR4 activation.

It is found in the secreted. Its subcellular location is the cytoplasmic granule. Transferrins are iron binding transport proteins which can bind two Fe(3+) ions in association with the binding of an anion, usually bicarbonate. In terms of biological role, major iron-binding and multifunctional protein found in exocrine fluids such as breast milk and mucosal secretions. Has antimicrobial activity, which depends on the extracellular cation concentration. Antimicrobial properties include bacteriostasis, which is related to its ability to sequester free iron and thus inhibit microbial growth, as well as direct bactericidal properties leading to the release of lipopolysaccharides from the bacterial outer membrane. Can also prevent bacterial biofilm development in P.aeruginosa infection. Has weak antifungal activity against C.albicans. Has anabolic, differentiating and anti-apoptotic effects on osteoblasts and can also inhibit osteoclastogenesis, possibly playing a role in the regulation of bone growth. Promotes binding of species C adenoviruses to epithelial cells, promoting adenovirus infection. Can inhibit papillomavirus infections. Stimulates the TLR4 signaling pathway leading to NF-kappa-B activation and subsequent pro-inflammatory cytokine production while also interfering with the lipopolysaccharide (LPS)-stimulated TLR4 signaling. Inhibits neutrophil granulocyte migration to sites of apoptosis, when secreted by apoptotic cells. Stimulates VEGFA-mediated endothelial cell migration and proliferation. Binds heparin, chondroitin sulfate and possibly other glycosaminoglycans (GAGs). Also binds specifically to pneumococcal surface protein A (PspA), the lipid A portion of bacterial lipopolysaccharide (LPS), lysozyme and DNA. Functionally, lactoferricin binds to the bacterial surface and is crucial for the bactericidal functions. Has some antiviral activity against papillomavirus infection. N-terminal region shows strong antifungal activity against C.albicans. Contains two BBXB heparin-binding consensus sequences that appear to form the predominate functional GAG-binding site. Its function is as follows. The lactotransferrin transferrin-like domain 1 functions as a serine protease of the peptidase S60 family that cuts arginine rich regions. This function contributes to the antimicrobial activity. Shows a preferential cleavage at -Arg-Ser-Arg-Arg-|- and -Arg-Arg-Ser-Arg-|-, and of Z-Phe-Arg-|-aminomethylcoumarin sites. The sequence is that of Lactotransferrin (LTF) from Capra hircus (Goat).